A 154-amino-acid polypeptide reads, in one-letter code: Transcriptional repressor NrdR (154 aa).

The segment at 3-34 is a zinc-finger region; the sequence is CPFCRHPDSRVIDSRETDEGQAIRRRRSCPEC. Residues 46 to 136 form the ATP-cone domain; that stretch reads LAVVKRSGVT…VYRSFESADD (91 aa).

Belongs to the NrdR family. The cofactor is Zn(2+).

Functionally, negatively regulates transcription of bacterial ribonucleotide reductase nrd genes and operons by binding to NrdR-boxes. The chain is Transcriptional repressor NrdR from Mycobacterium avium (strain 104).